Consider the following 545-residue polypeptide: High-molecular-weight cytochrome c (545 aa).

Residues M1–T31 form the signal peptide. H66, H69, C80, C83, H84, H111, C114, C117, H118, C135, C138, H139, H159, H162, C178, C181, H182, H183, C202, C205, H206, H222, C225, C228, H229, C244, C247, H248, H298, H301, C308, C311, H312, H313, C319, C322, H323, H341, C349, C352, H353, C362, C365, H366, C378, C381, H382, H449, H470, C477, C480, H481, H482, C493, C496, H497, H516, C519, C522, H523, C536, C539, and H540 together coordinate heme c.

In terms of assembly, monomer. Binds 16 heme c groups per subunit. High-spin heme 15 has single axial histidine ligand and the other hemes are low-spin bis-histidinyl coordinated.

It is found in the periplasm. Functionally, HMWC (high-molecular-weight cytochrome c), ORF2, ORF3, ORF4, ORF5 and ORF6 in the HMC operon form a transmembrane protein complex that allows electron flow from the periplasmic hydrogenase to the cytoplasmic enzymes that catalyze reduction of sulfates. This Nitratidesulfovibrio vulgaris (strain ATCC 29579 / DSM 644 / CCUG 34227 / NCIMB 8303 / VKM B-1760 / Hildenborough) (Desulfovibrio vulgaris) protein is High-molecular-weight cytochrome c (hmcA).